Consider the following 232-residue polypeptide: Two-component response regulator ORR4 (232 aa).

The 137-residue stretch at 11 to 147 (HVLAVDDSLI…DMKKLKSHLL (137 aa)) folds into the Response regulatory domain. A 4-aspartylphosphate modification is found at D80. 2 disordered regions span residues 153 to 174 (LPMA…AASA) and 202 to 232 (AAAM…AVET). The segment covering 209–232 (VISSPDQRTKPRLSSTSSGLAVET) has biased composition (polar residues).

Belongs to the ARR family. Type-A subfamily. Post-translationally, two-component system major event consists of a His-to-Asp phosphorelay between a sensor histidine kinase (HK) and a response regulator (RR). In plants, the His-to-Asp phosphorelay involves an additional intermediate named Histidine-containing phosphotransfer protein (HPt). This multistep phosphorelay consists of a His-Asp-His-Asp sequential transfer of a phosphate group between first a His and an Asp of the HK protein, followed by the transfer to a conserved His of the HPt protein and finally the transfer to an Asp in the receiver domain of the RR protein. In terms of tissue distribution, expressed in mature leaves and flowers, and at low levels in roots and shoots.

Functionally, functions as a response regulator involved in His-to-Asp phosphorelay signal transduction system. Phosphorylation of the Asp residue in the receiver domain activates the ability of the protein to promote the transcription of target genes. Type-A response regulators seem to act as negative regulators of the cytokinin signaling. This is Two-component response regulator ORR4 from Oryza sativa subsp. indica (Rice).